We begin with the raw amino-acid sequence, 157 residues long: Small ribosomal subunit protein uS7 (157 aa).

It belongs to the universal ribosomal protein uS7 family. Part of the 30S ribosomal subunit. Contacts proteins S9 and S11.

One of the primary rRNA binding proteins, it binds directly to 16S rRNA where it nucleates assembly of the head domain of the 30S subunit. Is located at the subunit interface close to the decoding center, probably blocks exit of the E-site tRNA. The polypeptide is Small ribosomal subunit protein uS7 (Roseiflexus castenholzii (strain DSM 13941 / HLO8)).